A 292-amino-acid chain; its full sequence is Shikimate dehydrogenase (NADP(+)) (292 aa).

Residues 25-27 and threonine 72 each bind shikimate; that span reads SKS. Catalysis depends on lysine 76, which acts as the Proton acceptor. Shikimate is bound by residues asparagine 97 and aspartate 113. NADP(+)-binding positions include 137–141, 161–166, and methionine 230; these read GAGGA and NRTQSK. Residue tyrosine 232 coordinates shikimate. Position 254 (glycine 254) interacts with NADP(+).

This sequence belongs to the shikimate dehydrogenase family. As to quaternary structure, homodimer.

The catalysed reaction is shikimate + NADP(+) = 3-dehydroshikimate + NADPH + H(+). The protein operates within metabolic intermediate biosynthesis; chorismate biosynthesis; chorismate from D-erythrose 4-phosphate and phosphoenolpyruvate: step 4/7. In terms of biological role, involved in the biosynthesis of the chorismate, which leads to the biosynthesis of aromatic amino acids. Catalyzes the reversible NADPH linked reduction of 3-dehydroshikimate (DHSA) to yield shikimate (SA). The chain is Shikimate dehydrogenase (NADP(+)) from Shewanella sp. (strain ANA-3).